We begin with the raw amino-acid sequence, 448 residues long: Asparagine--tRNA ligase (448 aa).

It belongs to the class-II aminoacyl-tRNA synthetase family. As to quaternary structure, homodimer.

It localises to the cytoplasm. The enzyme catalyses tRNA(Asn) + L-asparagine + ATP = L-asparaginyl-tRNA(Asn) + AMP + diphosphate + H(+). The sequence is that of Asparagine--tRNA ligase from Streptococcus agalactiae serotype Ia (strain ATCC 27591 / A909 / CDC SS700).